Reading from the N-terminus, the 159-residue chain is 3-hydroxyacyl-[acyl-carrier-protein] dehydratase FabZ (159 aa).

H58 is an active-site residue.

This sequence belongs to the thioester dehydratase family. FabZ subfamily.

The protein localises to the cytoplasm. It catalyses the reaction a (3R)-hydroxyacyl-[ACP] = a (2E)-enoyl-[ACP] + H2O. Functionally, involved in unsaturated fatty acids biosynthesis. Catalyzes the dehydration of short chain beta-hydroxyacyl-ACPs and long chain saturated and unsaturated beta-hydroxyacyl-ACPs. The chain is 3-hydroxyacyl-[acyl-carrier-protein] dehydratase FabZ from Helicobacter pylori (strain G27).